The primary structure comprises 132 residues: Small ribosomal subunit protein uS8 (132 aa).

This sequence belongs to the universal ribosomal protein uS8 family. As to quaternary structure, part of the 30S ribosomal subunit. Contacts proteins S5 and S12.

Its function is as follows. One of the primary rRNA binding proteins, it binds directly to 16S rRNA central domain where it helps coordinate assembly of the platform of the 30S subunit. This Alkaliphilus oremlandii (strain OhILAs) (Clostridium oremlandii (strain OhILAs)) protein is Small ribosomal subunit protein uS8.